The primary structure comprises 398 residues: S-adenosylmethionine synthase (398 aa).

His16 provides a ligand contact to ATP. Asp18 is a binding site for Mg(2+). Residue Glu44 participates in K(+) binding. L-methionine-binding residues include Glu57 and Gln100. The tract at residues 100–110 (QSPDIAQGVNE) is flexible loop. Residues 175 to 177 (DAK), 242 to 243 (RF), Asp251, 257 to 258 (RK), Ala274, and Lys278 each bind ATP. Asp251 is an L-methionine binding site. Lys282 lines the L-methionine pocket.

This sequence belongs to the AdoMet synthase family. As to quaternary structure, homotetramer; dimer of dimers. It depends on Mg(2+) as a cofactor. Requires K(+) as cofactor.

The protein resides in the cytoplasm. The enzyme catalyses L-methionine + ATP + H2O = S-adenosyl-L-methionine + phosphate + diphosphate. It participates in amino-acid biosynthesis; S-adenosyl-L-methionine biosynthesis; S-adenosyl-L-methionine from L-methionine: step 1/1. Functionally, catalyzes the formation of S-adenosylmethionine (AdoMet) from methionine and ATP. The overall synthetic reaction is composed of two sequential steps, AdoMet formation and the subsequent tripolyphosphate hydrolysis which occurs prior to release of AdoMet from the enzyme. This chain is S-adenosylmethionine synthase, found in Streptococcus agalactiae serotype III (strain NEM316).